We begin with the raw amino-acid sequence, 160 residues long: Sulfur-rich protein (160 aa).

Helical transmembrane passes span 62–82 (ITMVVLGVILLIAGLALTFVL) and 91–111 (FLFLIPAVIGLVKLLTTSVFM).

The protein localises to the membrane. The sequence is that of Sulfur-rich protein (srp) from Chlamydia caviae (strain ATCC VR-813 / DSM 19441 / 03DC25 / GPIC) (Chlamydophila caviae).